Here is an 852-residue protein sequence, read N- to C-terminus: Patatin-like phospholipase domain-containing protein CaO19.1504 (852 aa).

Residues A41 to D52 show a composition bias toward low complexity. The disordered stretch occupies residues A41 to S184. Residues I75–Y95 show a composition bias toward polar residues. The segment covering S101–T110 has biased composition (low complexity). Over residues D113 to D122 the composition is skewed to acidic residues. Low complexity-rich tracts occupy residues S129–S142 and G158–S171. A helical transmembrane segment spans residues W207–I227. The PNPLA domain maps to L396–N588. Residues G427–G431 carry the GXSXG motif. Residue S429 is the Nucleophile of the active site. The active-site Proton acceptor is D575. The segment at K800–T840 is disordered. The span at E805–L833 shows a compositional bias: acidic residues.

This sequence belongs to the PLPL family.

It localises to the membrane. Probable lipid hydrolase. In Candida albicans (strain SC5314 / ATCC MYA-2876) (Yeast), this protein is Patatin-like phospholipase domain-containing protein CaO19.1504.